A 211-amino-acid chain; its full sequence is ATP-dependent Clp protease proteolytic subunit 2 (211 aa).

Ser-106 serves as the catalytic Nucleophile. The active site involves His-131.

Belongs to the peptidase S14 family. Fourteen ClpP subunits assemble into 2 heptameric rings which stack back to back to give a disk-like structure with a central cavity, resembling the structure of eukaryotic proteasomes.

It localises to the cytoplasm. The enzyme catalyses Hydrolysis of proteins to small peptides in the presence of ATP and magnesium. alpha-casein is the usual test substrate. In the absence of ATP, only oligopeptides shorter than five residues are hydrolyzed (such as succinyl-Leu-Tyr-|-NHMec, and Leu-Tyr-Leu-|-Tyr-Trp, in which cleavage of the -Tyr-|-Leu- and -Tyr-|-Trp bonds also occurs).. In terms of biological role, cleaves peptides in various proteins in a process that requires ATP hydrolysis. Has a chymotrypsin-like activity. Plays a major role in the degradation of misfolded proteins. This chain is ATP-dependent Clp protease proteolytic subunit 2, found in Bradyrhizobium diazoefficiens (strain JCM 10833 / BCRC 13528 / IAM 13628 / NBRC 14792 / USDA 110).